We begin with the raw amino-acid sequence, 255 residues long: Type III pantothenate kinase (255 aa).

12–19 (DIGNSYTK) contributes to the ATP binding site. A substrate-binding site is contributed by 109–112 (GDDL). Catalysis depends on aspartate 111, which acts as the Proton acceptor. Residue threonine 133 coordinates ATP. A substrate-binding site is contributed by threonine 185.

The protein belongs to the type III pantothenate kinase family. As to quaternary structure, homodimer. Requires NH4(+) as cofactor. It depends on K(+) as a cofactor.

The protein resides in the cytoplasm. It carries out the reaction (R)-pantothenate + ATP = (R)-4'-phosphopantothenate + ADP + H(+). Its pathway is cofactor biosynthesis; coenzyme A biosynthesis; CoA from (R)-pantothenate: step 1/5. Functionally, catalyzes the phosphorylation of pantothenate (Pan), the first step in CoA biosynthesis. In Malacoplasma penetrans (strain HF-2) (Mycoplasma penetrans), this protein is Type III pantothenate kinase.